The primary structure comprises 147 residues: Large ribosomal subunit protein uL13 (147 aa).

The protein belongs to the universal ribosomal protein uL13 family. As to quaternary structure, part of the 50S ribosomal subunit.

In terms of biological role, this protein is one of the early assembly proteins of the 50S ribosomal subunit, although it is not seen to bind rRNA by itself. It is important during the early stages of 50S assembly. This Leuconostoc citreum (strain KM20) protein is Large ribosomal subunit protein uL13.